The following is a 189-amino-acid chain: Peptidyl-tRNA hydrolase (189 aa).

Tyrosine 14 provides a ligand contact to tRNA. Histidine 19 acts as the Proton acceptor in catalysis. Positions 64, 66, and 112 each coordinate tRNA.

It belongs to the PTH family. Monomer.

Its subcellular location is the cytoplasm. It catalyses the reaction an N-acyl-L-alpha-aminoacyl-tRNA + H2O = an N-acyl-L-amino acid + a tRNA + H(+). Hydrolyzes ribosome-free peptidyl-tRNAs (with 1 or more amino acids incorporated), which drop off the ribosome during protein synthesis, or as a result of ribosome stalling. Its function is as follows. Catalyzes the release of premature peptidyl moieties from peptidyl-tRNA molecules trapped in stalled 50S ribosomal subunits, and thus maintains levels of free tRNAs and 50S ribosomes. This is Peptidyl-tRNA hydrolase from Clostridium botulinum (strain Loch Maree / Type A3).